An 86-amino-acid polypeptide reads, in one-letter code: Omega-theraphotoxin-Hhn1a 2 (86 aa).

Residues 1-21 (MKSIVFVALLGLALLAVVCSA) form the signal peptide. The propeptide occupies 22-50 (SEDAHKELLKEVVRAMVVDKTDAVQAEER). Cystine bridges form between cysteine 52-cysteine 66, cysteine 59-cysteine 71, and cysteine 65-cysteine 78.

This sequence belongs to the neurotoxin 10 (Hwtx-1) family. 17 (Hntx-9) subfamily. As to expression, expressed by the venom gland.

The protein resides in the secreted. Ion channel inhibitor. The chain is Omega-theraphotoxin-Hhn1a 2 from Cyriopagopus hainanus (Chinese bird spider).